The sequence spans 610 residues: T-cell immunomodulatory protein (610 aa).

An N-terminal signal peptide occupies residues 1–32 (MAAGLLPSARAVLALLFLGLALLSVGPAPAQA). Residues Asn35, Asn94, Asn123, Asn138, Asn145, Asn150, Asn175, and Asn241 are each glycosylated (N-linked (GlcNAc...) asparagine). One copy of the FG-GAP 1; atypical repeat lies at 98–135 (LVTSVVPGDYDGDSQMDVLLTYFPQNHSNNELGAVIFW). The stretch at 153 to 183 (FHDQPLIMDFNGDLIPDVFAITNESSQPQIL) is one FG-GAP 2; atypical repeat. Residues 256 to 291 (VVGQSAFADFDGDGHMDHLLPGCEDKDCQKSAIYLM) form an FG-GAP 3; atypical repeat. N-linked (GlcNAc...) asparagine glycans are attached at residues Asn351, Asn369, and Asn480. Residues 564–584 (IVLLTAVALTGVCVFILAIIA) form a helical membrane-spanning segment.

This sequence belongs to the TIP family. In terms of assembly, interacts with RUVBL1, RUVBL2 and alpha-tubulin.

The protein localises to the secreted. It localises to the cell membrane. Functionally, modulator of T-cell function. Has a protective effect in graft versus host disease model. The protein is T-cell immunomodulatory protein of Rattus norvegicus (Rat).